The chain runs to 838 residues: Semaphorin-4G (838 aa).

The first 17 residues, 1–17, serve as a signal peptide directing secretion; it reads MWGRLWPLLLSILTATA. The Extracellular portion of the chain corresponds to 18 to 675; the sequence is VPGPSLRRPS…GAQLAPDVRL (658 aa). In terms of domain architecture, Sema spans 35–505; sequence RMTIPYEELS…APSGVIQLPL (471 aa). N-linked (GlcNAc...) asparagine glycosylation is found at N55, N111, and N126. A disulfide bond links C104 and C115. Cystine bridges form between C133/C142, C270/C377, and C294/C337. N388 is a glycosylation site (N-linked (GlcNAc...) asparagine). Residues 507–558 form the PSI domain; that stretch reads SCSRYRSCYDCILARDPYCGWDPGTHACAAATTIANRTALIQDIERGNRGCE. 2 disulfide bridges follow: C508/C525 and C517/C534. N-linked (GlcNAc...) asparagine glycosylation is found at N542 and N598. The region spanning 567–649 is the Ig-like C2-type domain; it reads PPLKTRSVLR…RTLLASYSLT (83 aa). C584 and C632 are disulfide-bonded. A helical membrane pass occupies residues 676–696; the sequence is LYVLAIAALGGLCLILASSLL. The Cytoplasmic portion of the chain corresponds to 697–838; it reads YVACLREGRR…LVEQLDESSV (142 aa). The tract at residues 723 to 777 is disordered; the sequence is SAVQLQTVSGQCPGEEDEGDDEGAGGLEGSCLQIIPGEGAPAPPPPPPPPPPAEL. Over residues 736–745 the composition is skewed to acidic residues; it reads GEEDEGDDEG. The span at 763-775 shows a compositional bias: pro residues; sequence PAPPPPPPPPPPA. Phosphoserine is present on residues S795 and S837.

It belongs to the semaphorin family. As to quaternary structure, interacts with PLXNB2.

The protein localises to the cell membrane. Its function is as follows. Cell surface receptor for PLXNB2. May play a role in axon guidance. This Homo sapiens (Human) protein is Semaphorin-4G (SEMA4G).